The chain runs to 151 residues: Phosphoribosyl-AMP cyclohydrolase (151 aa).

D94 contacts Mg(2+). Zn(2+) is bound at residue C95. 2 residues coordinate Mg(2+): D96 and D98. C112 and C119 together coordinate Zn(2+).

This sequence belongs to the PRA-CH family. As to quaternary structure, homodimer. It depends on Mg(2+) as a cofactor. Requires Zn(2+) as cofactor.

The protein localises to the cytoplasm. It carries out the reaction 1-(5-phospho-beta-D-ribosyl)-5'-AMP + H2O = 1-(5-phospho-beta-D-ribosyl)-5-[(5-phospho-beta-D-ribosylamino)methylideneamino]imidazole-4-carboxamide. It participates in amino-acid biosynthesis; L-histidine biosynthesis; L-histidine from 5-phospho-alpha-D-ribose 1-diphosphate: step 3/9. In terms of biological role, catalyzes the hydrolysis of the adenine ring of phosphoribosyl-AMP. This Rhodopseudomonas palustris (strain TIE-1) protein is Phosphoribosyl-AMP cyclohydrolase.